The chain runs to 38 residues: Potassium channel toxin alpha-KTx 3.11 (38 aa).

3 disulfide bridges follow: cysteine 8–cysteine 28, cysteine 14–cysteine 33, and cysteine 18–cysteine 35.

Belongs to the short scorpion toxin superfamily. Potassium channel inhibitor family. Alpha-KTx 03 subfamily. In terms of tissue distribution, expressed by the venom gland.

The protein resides in the secreted. Blocks the voltage-gated potassium channel Kv1.3/KCNA3 (IC(50)=7.2 nM). Correnti and colleagues have also shown that this toxin inhibits Kv1.1/KCNA1, which is different from Abdel-Mottaleb and colleagues conclusions. This is Potassium channel toxin alpha-KTx 3.11 from Odontobuthus doriae (Yellow Iranian scorpion).